A 350-amino-acid polypeptide reads, in one-letter code: Arginine N-succinyltransferase (350 aa).

Position 125 (Leu-125) interacts with succinyl-CoA. His-229 (proton donor) is an active-site residue.

Belongs to the arginine N-succinyltransferase family.

It carries out the reaction succinyl-CoA + L-arginine = N(2)-succinyl-L-arginine + CoA + H(+). It functions in the pathway amino-acid degradation; L-arginine degradation via AST pathway; L-glutamate and succinate from L-arginine: step 1/5. In terms of biological role, catalyzes the transfer of succinyl-CoA to arginine to produce N(2)-succinylarginine. The protein is Arginine N-succinyltransferase of Yersinia pseudotuberculosis serotype O:3 (strain YPIII).